Reading from the N-terminus, the 698-residue chain is Elongation factor G (698 aa).

One can recognise a tr-type G domain in the interval 10-285; it reads AATRNIGIMA…AVVDFLPSPT (276 aa). GTP is bound by residues 19 to 26, 83 to 87, and 137 to 140; these read AHIDAGKT, DTPGH, and NKMD.

This sequence belongs to the TRAFAC class translation factor GTPase superfamily. Classic translation factor GTPase family. EF-G/EF-2 subfamily.

The protein resides in the cytoplasm. Functionally, catalyzes the GTP-dependent ribosomal translocation step during translation elongation. During this step, the ribosome changes from the pre-translocational (PRE) to the post-translocational (POST) state as the newly formed A-site-bound peptidyl-tRNA and P-site-bound deacylated tRNA move to the P and E sites, respectively. Catalyzes the coordinated movement of the two tRNA molecules, the mRNA and conformational changes in the ribosome. The chain is Elongation factor G from Parafrankia sp. (strain EAN1pec).